Reading from the N-terminus, the 370-residue chain is D-alanine--D-alanine ligase (370 aa).

The ATP-grasp domain maps to 144 to 352 (KKIFADAGIP…YSALIERLVD (209 aa)). 177 to 232 (EEVLTYPVFVKPANLGSSVGISKATNKKELEDAMTEAFLYDRRVVVEQGVVAREIE) provides a ligand contact to ATP. Mg(2+) contacts are provided by D306, E319, and N321.

Belongs to the D-alanine--D-alanine ligase family. Mg(2+) serves as cofactor. Requires Mn(2+) as cofactor.

It is found in the cytoplasm. The catalysed reaction is 2 D-alanine + ATP = D-alanyl-D-alanine + ADP + phosphate + H(+). The protein operates within cell wall biogenesis; peptidoglycan biosynthesis. In terms of biological role, cell wall formation. The polypeptide is D-alanine--D-alanine ligase (Listeria welshimeri serovar 6b (strain ATCC 35897 / DSM 20650 / CCUG 15529 / CIP 8149 / NCTC 11857 / SLCC 5334 / V8)).